Consider the following 157-residue polypeptide: SsrA-binding protein (157 aa).

Residues 133–157 (LHDKRESEKKRDWGREKGRLLRARG) are disordered. Residues 135–151 (DKRESEKKRDWGREKGR) are compositionally biased toward basic and acidic residues.

Belongs to the SmpB family.

The protein resides in the cytoplasm. Functionally, required for rescue of stalled ribosomes mediated by trans-translation. Binds to transfer-messenger RNA (tmRNA), required for stable association of tmRNA with ribosomes. tmRNA and SmpB together mimic tRNA shape, replacing the anticodon stem-loop with SmpB. tmRNA is encoded by the ssrA gene; the 2 termini fold to resemble tRNA(Ala) and it encodes a 'tag peptide', a short internal open reading frame. During trans-translation Ala-aminoacylated tmRNA acts like a tRNA, entering the A-site of stalled ribosomes, displacing the stalled mRNA. The ribosome then switches to translate the ORF on the tmRNA; the nascent peptide is terminated with the 'tag peptide' encoded by the tmRNA and targeted for degradation. The ribosome is freed to recommence translation, which seems to be the essential function of trans-translation. This Bradyrhizobium sp. (strain BTAi1 / ATCC BAA-1182) protein is SsrA-binding protein.